A 487-amino-acid chain; its full sequence is Lysine--tRNA ligase (487 aa).

Residues Glu398 and Glu405 each contribute to the Mg(2+) site.

It belongs to the class-II aminoacyl-tRNA synthetase family. As to quaternary structure, homodimer. Mg(2+) serves as cofactor.

It localises to the cytoplasm. The catalysed reaction is tRNA(Lys) + L-lysine + ATP = L-lysyl-tRNA(Lys) + AMP + diphosphate. The polypeptide is Lysine--tRNA ligase (Mycoplasma mobile (strain ATCC 43663 / 163K / NCTC 11711) (Mesomycoplasma mobile)).